A 98-amino-acid chain; its full sequence is Acylphosphatase-1 (98 aa).

Positions 8–98 (SVDYEVFGKV…LEHSTFSICK (91 aa)) constitute an Acylphosphatase-like domain. Active-site residues include R23 and N41.

The protein belongs to the acylphosphatase family.

The enzyme catalyses an acyl phosphate + H2O = a carboxylate + phosphate + H(+). In Xenopus tropicalis (Western clawed frog), this protein is Acylphosphatase-1 (acyp1).